Consider the following 445-residue polypeptide: MHGHSRNGQAHVPRRKRRNRFVKKNGQCNVYFANLSNKSQRYMADIFTTCVDTRWRYMLMIFSAAFLVSWLFFGLLFWCIAFFHGDLEASPGVPAAGGPAAGGGGAAPVAPKPCIMHVNGFLGAFLFSVETQTTIGYGFRCVTEECPLAVIAVVVQSIVGCVIDSFMIGTIMAKMARPKKRAQTLLFSHHAVISVRDGKLCLMWRVGNLRKSHIVEAHVRAQLIKPYMTQEGEYLPLDQRDLNVGYDIGLDRIFLVSPIIIVHEIDEDSPLYGMGKEELESEDFEIVVILEGMVEATAMTTQARSSYLASEILWGHRFEPVVFEEKSHYKVDYSRFHKTYEVAGTPCCSARELQESKITVLPAPPPPPSAFCYENELALMSQEEEEMEEEAAAAAAVAAGLGLEAGSKEEAGIIRMLEFGSHLDLERMQASLPLDNISYRRESAI.

The Cytoplasmic portion of the chain corresponds to 1 to 55 (MHGHSRNGQAHVPRRKRRNRFVKKNGQCNVYFANLSNKSQRYMADIFTTCVDTRW). The chain crosses the membrane as a helical span at residues 56–80 (RYMLMIFSAAFLVSWLFFGLLFWCI). Over 81–120 (AFFHGDLEASPGVPAAGGPAAGGGGAAPVAPKPCIMHVNG) the chain is Extracellular. Residues 91 to 111 (PGVPAAGGPAAGGGGAAPVAP) are val/Gly/Ala/Pro stretch. Positions 121 to 132 (FLGAFLFSVETQ) form an intramembrane region, helical; Pore-forming. An intramembrane region (pore-forming) is located at residues 133–139 (TTIGYGF). Residues 134–139 (TIGYGF) carry the Selectivity filter motif. The Extracellular portion of the chain corresponds to 140–148 (RCVTEECPL). The chain crosses the membrane as a helical span at residues 149–170 (AVIAVVVQSIVGCVIDSFMIGT). The Cytoplasmic segment spans residues 171-445 (IMAKMARPKK…NISYRRESAI (275 aa)). The short motif at 443 to 445 (SAI) is the PDZ-binding element.

The protein belongs to the inward rectifier-type potassium channel (TC 1.A.2.1) family. KCNJ4 subfamily. Homomultimeric and heteromultimeric association with KCNJ2 and KCNJ12. Interacts with DLG2 and DLG4. Associates, via its PDZ-recognition domain, with a complex containing LIN7A, LIN7B, LIN7C, DLG1, CASK and APBA1. Interacts with TAX1BP3. TAX1BP3 competes with LIN7 family members for KCNJ4 binding. Heart, skeletal muscle, and several different brain regions including the hippocampus.

The protein localises to the cell membrane. The protein resides in the postsynaptic cell membrane. It localises to the cytoplasmic vesicle membrane. It carries out the reaction K(+)(in) = K(+)(out). Functionally, inward rectifier potassium channels are characterized by a greater tendency to allow potassium to flow into the cell rather than out of it. Their voltage dependence is regulated by the concentration of extracellular potassium; as external potassium is raised, the voltage range of the channel opening shifts to more positive voltages. The inward rectification is mainly due to the blockage of outward current by internal magnesium. Can be blocked by extracellular barium and cesium. This is Inward rectifier potassium channel 4 (KCNJ4) from Homo sapiens (Human).